We begin with the raw amino-acid sequence, 285 residues long: 1,4-dihydroxy-2-naphthoyl-CoA synthase (285 aa).

Residues arginine 45, alanine 84–glutamine 88, tyrosine 97, tyrosine 129–glycine 133, threonine 155, serine 161, tyrosine 258, and lysine 273 contribute to the substrate site. Hydrogencarbonate is bound at residue glutamine 154–glycine 156.

This sequence belongs to the enoyl-CoA hydratase/isomerase family. MenB subfamily. In terms of assembly, homohexamer. The cofactor is hydrogencarbonate.

The enzyme catalyses 2-succinylbenzoyl-CoA + H(+) = 1,4-dihydroxy-2-naphthoyl-CoA + H2O. It participates in quinol/quinone metabolism; 1,4-dihydroxy-2-naphthoate biosynthesis; 1,4-dihydroxy-2-naphthoate from chorismate: step 6/7. The protein operates within quinol/quinone metabolism; menaquinone biosynthesis. Its function is as follows. Converts o-succinylbenzoyl-CoA (OSB-CoA) to 1,4-dihydroxy-2-naphthoyl-CoA (DHNA-CoA). This chain is 1,4-dihydroxy-2-naphthoyl-CoA synthase, found in Salmonella typhimurium (strain LT2 / SGSC1412 / ATCC 700720).